Consider the following 65-residue polypeptide: Large ribosomal subunit protein bL33 (65 aa).

The tract at residues 20–42 is disordered; it reads APASEKRSPGVSRYTTEKNRRNT.

Belongs to the bacterial ribosomal protein bL33 family.

The polypeptide is Large ribosomal subunit protein bL33 (Prochlorococcus marinus (strain SARG / CCMP1375 / SS120)).